The following is a 329-amino-acid chain: MASQLTDAFARKFYYLRLSITDVCNFRCTYCLPDGYKPSGVTNKGFLTVDEIRRVTRAFASLGTEKVRLTGGEPSLRRDFTDIIAAVRENDAIRQIAVTTNGYRLERDVANWRDAGLTGINVSVDSLDARQFHAITGQDKFNQVMAGIDAAFEAGFEKVKVNTVLMRDVNHHQLDTFLNWIQHRPIQLRFIELMETGEGIELFRKHHISGQVLRDELLRRGWIHQLRQRSDGPAQVFCHPDYAGEIGLIMPYEKDFCATCNRLRVSSIGKLHLCLFGEGGVNLRDLLEDDTQQQALEARISAALREKKQTHFLHQNNTGITQNLSYIGG.

In terms of domain architecture, Radical SAM core spans 8–234; sequence AFARKFYYLR…QLRQRSDGPA (227 aa). Residue Arg-17 coordinates GTP. Residues Cys-24 and Cys-28 each coordinate [4Fe-4S] cluster. Tyr-30 lines the S-adenosyl-L-methionine pocket. Residue Cys-31 coordinates [4Fe-4S] cluster. Residue Arg-68 participates in GTP binding. Gly-72 is a binding site for S-adenosyl-L-methionine. GTP is bound at residue Thr-99. Residue Ser-123 coordinates S-adenosyl-L-methionine. A GTP-binding site is contributed by Lys-160. Met-194 contributes to the S-adenosyl-L-methionine binding site. 2 residues coordinate [4Fe-4S] cluster: Cys-257 and Cys-260. 262–264 contacts GTP; sequence RLR. [4Fe-4S] cluster is bound at residue Cys-274.

The protein belongs to the radical SAM superfamily. MoaA family. In terms of assembly, monomer and homodimer. It depends on [4Fe-4S] cluster as a cofactor.

The enzyme catalyses GTP + AH2 + S-adenosyl-L-methionine = (8S)-3',8-cyclo-7,8-dihydroguanosine 5'-triphosphate + 5'-deoxyadenosine + L-methionine + A + H(+). Its pathway is cofactor biosynthesis; molybdopterin biosynthesis. Catalyzes the cyclization of GTP to (8S)-3',8-cyclo-7,8-dihydroguanosine 5'-triphosphate. The chain is GTP 3',8-cyclase from Escherichia coli O7:K1 (strain IAI39 / ExPEC).